The sequence spans 38 residues: Toxin Lqh 8/6 (38 aa).

4 disulfide bridges follow: Cys-2/Cys-19, Cys-5/Cys-28, Cys-16/Cys-33, and Cys-20/Cys-35.

In terms of tissue distribution, expressed by the venom gland.

It is found in the secreted. Toxin with unknown function in healthy organisms. On glioma cells, interacts with chloride channels (probably ClC-3/CLCN3) and MMP2 at the surface of glioma cells. This complex is then internalized via caveolae, thus inhibiting the chloride channels necessary for cell shrinkage and tumor propagation. In Leiurus hebraeus (Hebrew deathstalker scorpion), this protein is Toxin Lqh 8/6.